The chain runs to 343 residues: Probable long-chain-alcohol O-fatty-acyltransferase 2 (343 aa).

8 helical membrane-spanning segments follow: residues 7-27 (NLIKVWISALISISYCYYISS), 36-56 (LLSLLPIFIIFLLLPLFFSSV), 58-78 (FCVISGFFFTWLANFKLFLFA), 117-137 (PMSKWVLAFKLLIFSFLLHVY), 148-168 (FAFLALFTIHVYLEAELILVF), 235-255 (GMLATFIVSGLMHELIYFYVI), 260-280 (TWEVTCFFLLHGVVTCLEIAM), and 292-312 (AVSGLAITVFLLVTAGWLFYP).

Belongs to the wax synthase family.

The protein localises to the membrane. The enzyme catalyses a long chain fatty alcohol + a fatty acyl-CoA = a wax ester + CoA. Its function is as follows. Catalyzes the final step in the synthesis of long-chain linear esters (waxes). The chain is Probable long-chain-alcohol O-fatty-acyltransferase 2 (AT2) from Arabidopsis thaliana (Mouse-ear cress).